The chain runs to 209 residues: Uracil phosphoribosyltransferase (209 aa).

Residues R79, R104, and 131-139 contribute to the 5-phospho-alpha-D-ribose 1-diphosphate site; that span reads DPMLATGGS. Residues I194 and 199 to 201 contribute to the uracil site; that span reads GDA. D200 contributes to the 5-phospho-alpha-D-ribose 1-diphosphate binding site.

Belongs to the UPRTase family. The cofactor is Mg(2+).

The catalysed reaction is UMP + diphosphate = 5-phospho-alpha-D-ribose 1-diphosphate + uracil. The protein operates within pyrimidine metabolism; UMP biosynthesis via salvage pathway; UMP from uracil: step 1/1. Its activity is regulated as follows. Allosterically activated by GTP. Its function is as follows. Catalyzes the conversion of uracil and 5-phospho-alpha-D-ribose 1-diphosphate (PRPP) to UMP and diphosphate. This is Uracil phosphoribosyltransferase from Citrifermentans bemidjiense (strain ATCC BAA-1014 / DSM 16622 / JCM 12645 / Bem) (Geobacter bemidjiensis).